Reading from the N-terminus, the 264-residue chain is Acyl-[acyl-carrier-protein]--UDP-N-acetylglucosamine O-acyltransferase (264 aa).

This sequence belongs to the transferase hexapeptide repeat family. LpxA subfamily. Homotrimer.

Its subcellular location is the cytoplasm. The enzyme catalyses a (3R)-hydroxyacyl-[ACP] + UDP-N-acetyl-alpha-D-glucosamine = a UDP-3-O-[(3R)-3-hydroxyacyl]-N-acetyl-alpha-D-glucosamine + holo-[ACP]. The protein operates within glycolipid biosynthesis; lipid IV(A) biosynthesis; lipid IV(A) from (3R)-3-hydroxytetradecanoyl-[acyl-carrier-protein] and UDP-N-acetyl-alpha-D-glucosamine: step 1/6. Functionally, involved in the biosynthesis of lipid A, a phosphorylated glycolipid that anchors the lipopolysaccharide to the outer membrane of the cell. This chain is Acyl-[acyl-carrier-protein]--UDP-N-acetylglucosamine O-acyltransferase, found in Chlorobaculum tepidum (strain ATCC 49652 / DSM 12025 / NBRC 103806 / TLS) (Chlorobium tepidum).